Consider the following 185-residue polypeptide: Protein-lysine palmitoyltransferase CyaC (185 aa).

Residues H33 and D102 contribute to the active site.

Belongs to the RTX toxin acyltransferase family. Homodimer.

It is found in the cytoplasm. It carries out the reaction hexadecanoyl-[ACP] + L-lysyl-[protein] = N(6)-hexadecanoyl-L-lysyl-[protein] + holo-[ACP] + H(+). It catalyses the reaction (9Z)-hexadecenoyl-[ACP] + L-lysyl-[protein] = N(6)-[(9Z)-hexadecenoyl]-L-lysyl-[protein] + holo-[ACP] + H(+). In terms of biological role, protein-lysine palmitoyltransferase that catalyzes palmitoylation of the protoxin (CyaA) at two internal lysine residues, thereby converting it to the active toxin. The sequence is that of Protein-lysine palmitoyltransferase CyaC from Bordetella bronchiseptica (strain ATCC BAA-588 / NCTC 13252 / RB50) (Alcaligenes bronchisepticus).